The primary structure comprises 514 residues: Alpha-amylase (514 aa).

The N-terminal stretch at 1–31 (MIQKRKRTVSFRLVLMCTLLFVSLPITKTSA) is a signal peptide. Residues asparagine 133, aspartate 190, alanine 212, aspartate 214, aspartate 225, aspartate 231, aspartate 233, and aspartate 235 each contribute to the Ca(2+) site. Position 190 (aspartate 190) interacts with Na(+). Aspartate 214, aspartate 225, and aspartate 231 together coordinate Na(+). The active-site Nucleophile is aspartate 262. Histidine 266 is a Ca(2+) binding site. Glutamate 292 (proton donor) is an active-site residue. Residues glycine 331, aspartate 438, and aspartate 461 each contribute to the Ca(2+) site.

Belongs to the glycosyl hydrolase 13 family. In terms of assembly, monomer. Ca(2+) is required as a cofactor. The cofactor is Na(+).

The protein localises to the secreted. It catalyses the reaction Endohydrolysis of (1-&gt;4)-alpha-D-glucosidic linkages in polysaccharides containing three or more (1-&gt;4)-alpha-linked D-glucose units.. This is Alpha-amylase from Bacillus amyloliquefaciens (Bacillus velezensis).